Consider the following 580-residue polypeptide: Potassium-transporting ATPase potassium-binding subunit (580 aa).

10 consecutive transmembrane segments (helical) span residues 3-23 (ASGALQPALYLAVLIGLSVPL), 65-85 (DYAFAVLAFNLAGLLVLYALQ), 136-156 (GLGVQNFVSAATGMAVLVALI), 179-199 (LYILLPLSLLLAVLLVSQGVV), 263-283 (LSNFLEMLAILLIPAALCHTF), 293-313 (GWAVLAAMTAIFAVLLVACVA), 399-419 (GLYGMLMFVVIAVFVAGLMVG), 436-456 (MASLVVLFPAITVLVGTAIAV), 504-524 (AIGVAMLVGRYAVIVPVLALA), and 546-566 (LFVGLLTGTVLLVGALTFVPA).

This sequence belongs to the KdpA family. As to quaternary structure, the system is composed of three essential subunits: KdpA, KdpB and KdpC.

Its subcellular location is the cell inner membrane. Its function is as follows. Part of the high-affinity ATP-driven potassium transport (or Kdp) system, which catalyzes the hydrolysis of ATP coupled with the electrogenic transport of potassium into the cytoplasm. This subunit binds the periplasmic potassium ions and delivers the ions to the membrane domain of KdpB through an intramembrane tunnel. The sequence is that of Potassium-transporting ATPase potassium-binding subunit from Sorangium cellulosum (strain So ce56) (Polyangium cellulosum (strain So ce56)).